The chain runs to 512 residues: tRNA-2-methylthio-N(6)-dimethylallyladenosine synthase (512 aa).

Residues 1–20 (MLQQADGVSPDRSSCDTPAP) form a disordered region. In terms of domain architecture, MTTase N-terminal spans 21–137 (RTFEVRTYGC…LPTLLDRARH (117 aa)). [4Fe-4S] cluster is bound by residues Cys-30, Cys-66, Cys-100, Cys-174, Cys-178, and Cys-181. The Radical SAM core domain occupies 160-397 (RESAYAAWVS…ELQERISWEE (238 aa)). A TRAM domain is found at 399 to 469 (RAQIGREVEL…PHHLIADAGP (71 aa)). Basic and acidic residues predominate over residues 470–486 (AEHRRTRAGDAHAEGRT). The disordered stretch occupies residues 470–512 (AEHRRTRAGDAHAEGRTPKTGVGLGMPGIGAPEPAPVTQGCAL).

Belongs to the methylthiotransferase family. MiaB subfamily. As to quaternary structure, monomer. It depends on [4Fe-4S] cluster as a cofactor.

The protein localises to the cytoplasm. It carries out the reaction N(6)-dimethylallyladenosine(37) in tRNA + (sulfur carrier)-SH + AH2 + 2 S-adenosyl-L-methionine = 2-methylsulfanyl-N(6)-dimethylallyladenosine(37) in tRNA + (sulfur carrier)-H + 5'-deoxyadenosine + L-methionine + A + S-adenosyl-L-homocysteine + 2 H(+). Its function is as follows. Catalyzes the methylthiolation of N6-(dimethylallyl)adenosine (i(6)A), leading to the formation of 2-methylthio-N6-(dimethylallyl)adenosine (ms(2)i(6)A) at position 37 in tRNAs that read codons beginning with uridine. This is tRNA-2-methylthio-N(6)-dimethylallyladenosine synthase from Mycolicibacterium gilvum (strain PYR-GCK) (Mycobacterium gilvum (strain PYR-GCK)).